Here is a 151-residue protein sequence, read N- to C-terminus: Small ribosomal subunit protein uS9 (151 aa).

It belongs to the universal ribosomal protein uS9 family.

This chain is Small ribosomal subunit protein uS9 (RpS16), found in Spodoptera frugiperda (Fall armyworm).